Consider the following 203-residue polypeptide: Dual specificity phosphatase 29 (203 aa).

Positions 47-193 (HVNQVWPRIY…LRALDIALQE (147 aa)) constitute a Tyrosine-protein phosphatase domain. A substrate-binding site is contributed by 137–144 (HCVMGRSR). The active-site Phosphocysteine intermediate is C138.

This sequence belongs to the protein-tyrosine phosphatase family. Non-receptor class dual specificity subfamily.

The protein localises to the cytoplasm. The protein resides in the nucleus. The enzyme catalyses O-phospho-L-tyrosyl-[protein] + H2O = L-tyrosyl-[protein] + phosphate. It carries out the reaction O-phospho-L-seryl-[protein] + H2O = L-seryl-[protein] + phosphate. It catalyses the reaction O-phospho-L-threonyl-[protein] + H2O = L-threonyl-[protein] + phosphate. In terms of biological role, dual specificity phosphatase able to dephosphorylate phosphotyrosine, phosphoserine and phosphothreonine residues within the same substrate, with a preference for phosphotyrosine as a substrate. Involved in the modulation of AMPK and MAPK1/2 signaling pathways. The sequence is that of Dual specificity phosphatase 29 (dusp29) from Oryzias latipes (Japanese rice fish).